Here is a 346-residue protein sequence, read N- to C-terminus: tRNA N6-adenosine threonylcarbamoyltransferase (346 aa).

H111 and H115 together coordinate Fe cation. Substrate contacts are provided by residues 134–138 (LVSGG), D167, G180, and N279. D307 lines the Fe cation pocket.

This sequence belongs to the KAE1 / TsaD family. Fe(2+) is required as a cofactor.

It is found in the cytoplasm. The catalysed reaction is L-threonylcarbamoyladenylate + adenosine(37) in tRNA = N(6)-L-threonylcarbamoyladenosine(37) in tRNA + AMP + H(+). In terms of biological role, required for the formation of a threonylcarbamoyl group on adenosine at position 37 (t(6)A37) in tRNAs that read codons beginning with adenine. Is involved in the transfer of the threonylcarbamoyl moiety of threonylcarbamoyl-AMP (TC-AMP) to the N6 group of A37, together with TsaE and TsaB. TsaD likely plays a direct catalytic role in this reaction. In Burkholderia multivorans (strain ATCC 17616 / 249), this protein is tRNA N6-adenosine threonylcarbamoyltransferase.